A 129-amino-acid polypeptide reads, in one-letter code: Small ribosomal subunit protein uS11 (129 aa).

Belongs to the universal ribosomal protein uS11 family. Part of the 30S ribosomal subunit. Interacts with proteins S7 and S18. Binds to IF-3.

Located on the platform of the 30S subunit, it bridges several disparate RNA helices of the 16S rRNA. Forms part of the Shine-Dalgarno cleft in the 70S ribosome. The chain is Small ribosomal subunit protein uS11 from Serratia proteamaculans (strain 568).